A 511-amino-acid chain; its full sequence is GMP synthase [glutamine-hydrolyzing] (511 aa).

One can recognise a Glutamine amidotransferase type-1 domain in the interval 3-193 (KILILDFGGQ…VYSICDVAGD (191 aa)). Cysteine 80 functions as the Nucleophile in the catalytic mechanism. Active-site residues include histidine 167 and glutamate 169. Residues 194–384 (WEPKNIKLEK…LDIPYQNVYR (191 aa)) enclose the GMPS ATP-PPase domain. 221–227 (SGGVDSL) serves as a coordination point for ATP.

Homodimer.

The catalysed reaction is XMP + L-glutamine + ATP + H2O = GMP + L-glutamate + AMP + diphosphate + 2 H(+). It functions in the pathway purine metabolism; GMP biosynthesis; GMP from XMP (L-Gln route): step 1/1. Its function is as follows. Catalyzes the synthesis of GMP from XMP. This is GMP synthase [glutamine-hydrolyzing] from Malacoplasma penetrans (strain HF-2) (Mycoplasma penetrans).